Here is a 424-residue protein sequence, read N- to C-terminus: Enolase (424 aa).

Glutamine 162 provides a ligand contact to (2R)-2-phosphoglycerate. The Proton donor role is filled by glutamate 204. 3 residues coordinate Mg(2+): aspartate 241, glutamate 284, and aspartate 311. (2R)-2-phosphoglycerate contacts are provided by lysine 336, arginine 365, serine 366, and lysine 387. Lysine 336 serves as the catalytic Proton acceptor.

This sequence belongs to the enolase family. Requires Mg(2+) as cofactor.

It is found in the cytoplasm. The protein localises to the secreted. Its subcellular location is the cell surface. It catalyses the reaction (2R)-2-phosphoglycerate = phosphoenolpyruvate + H2O. Its pathway is carbohydrate degradation; glycolysis; pyruvate from D-glyceraldehyde 3-phosphate: step 4/5. Catalyzes the reversible conversion of 2-phosphoglycerate (2-PG) into phosphoenolpyruvate (PEP). It is essential for the degradation of carbohydrates via glycolysis. This chain is Enolase, found in Sinorhizobium fredii (strain NBRC 101917 / NGR234).